A 427-amino-acid polypeptide reads, in one-letter code: 3-phosphoshikimate 1-carboxyvinyltransferase (427 aa).

3-phosphoshikimate contacts are provided by Lys23, Ser24, and Arg28. Lys23 lines the phosphoenolpyruvate pocket. The phosphoenolpyruvate site is built by Gly97 and Arg125. The 3-phosphoshikimate site is built by Ser170, Ser171, Gln172, Ser198, Asp314, Asn337, and Lys341. Gln172 provides a ligand contact to phosphoenolpyruvate. Residue Asp314 is the Proton acceptor of the active site. Phosphoenolpyruvate contacts are provided by Arg345, Arg387, and Lys412.

The protein belongs to the EPSP synthase family. As to quaternary structure, monomer.

Its subcellular location is the cytoplasm. It catalyses the reaction 3-phosphoshikimate + phosphoenolpyruvate = 5-O-(1-carboxyvinyl)-3-phosphoshikimate + phosphate. The protein operates within metabolic intermediate biosynthesis; chorismate biosynthesis; chorismate from D-erythrose 4-phosphate and phosphoenolpyruvate: step 6/7. Functionally, catalyzes the transfer of the enolpyruvyl moiety of phosphoenolpyruvate (PEP) to the 5-hydroxyl of shikimate-3-phosphate (S3P) to produce enolpyruvyl shikimate-3-phosphate and inorganic phosphate. This is 3-phosphoshikimate 1-carboxyvinyltransferase from Buchnera aphidicola subsp. Acyrthosiphon pisum (strain 5A).